The sequence spans 366 residues: G-protein coupled receptor 183 (366 aa).

The Extracellular portion of the chain corresponds to 1 to 37; it reads MQVMRTFNQPPTSSHPTPTLNDSDTCITLYNHRGYAR. N-linked (GlcNAc...) asparagine glycosylation is present at asparagine 21. Residues 38–63 traverse the membrane as a helical segment; that stretch reads VLMPLFYCIVFFVGLLGNALAFHIIR. Topologically, residues 64 to 83 are cytoplasmic; that stretch reads PNVKKINSTTLYSANLVISD. A helical transmembrane segment spans residues 84–101; it reads ILFTLSLPLRIIYYALGF. At 102-111 the chain is on the extracellular side; sequence HWPLGETLCK. Cysteine 110 and cysteine 188 form a disulfide bridge. A helical transmembrane segment spans residues 112–133; the sequence is IVGLIFYINTYAGVNFMTCLSV. The Cytoplasmic segment spans residues 134 to 155; it reads DRFIAVVLPLRFARFRKVSNVR. Residues 156 to 174 form a helical membrane-spanning segment; the sequence is YICVGVWLLVLMQTLPLLS. Topologically, residues 175 to 199 are extracellular; that stretch reads MPMTNEEPDGFITCMEYPNFEPVPN. Residues 200-222 traverse the membrane as a helical segment; the sequence is ISYILIGAVFLGYGVPVVTILVC. Over 223–248 the chain is Cytoplasmic; sequence YSILCCKLRLAAKANQLTDKSGRSQK. A helical transmembrane segment spans residues 249–272; the sequence is AIGVICCVSLVFVVCFSPYHIDLL. Over 273–292 the chain is Extracellular; that stretch reads QYMIRKLIYTPDCAELTAFQ. Residues 293–317 form a helical membrane-spanning segment; sequence ISLHFTVCLMNLNSCLDPFIYFFAC. The Cytoplasmic segment spans residues 318-366; sequence KGYKTKVLKILKRQVSVSFSSAARTLPEGLSRDISDGNKIHLNSTRHKE.

This sequence belongs to the G-protein coupled receptor 1 family.

The protein resides in the cell membrane. Its function is as follows. G-protein coupled receptor expressed in lymphocytes that acts as a chemotactic receptor for B-cells, T-cells, splenic dendritic cells, monocytes/macrophages and astrocytes. Receptor for oxysterol 7-alpha,25-dihydroxycholesterol (7-alpha,25-OHC) and other related oxysterols. Mediates cell positioning and movement of a number of cells by binding the 7-alpha,25-OHC ligand that forms a chemotactic gradient. Binding of 7-alpha,25-OHC mediates the correct localization of B-cells during humoral immune responses. In Salmo salar (Atlantic salmon), this protein is G-protein coupled receptor 183 (gpr183).